Reading from the N-terminus, the 369-residue chain is S-adenosylmethionine:tRNA ribosyltransferase-isomerase (369 aa).

This sequence belongs to the QueA family. Monomer.

Its subcellular location is the cytoplasm. The enzyme catalyses 7-aminomethyl-7-carbaguanosine(34) in tRNA + S-adenosyl-L-methionine = epoxyqueuosine(34) in tRNA + adenine + L-methionine + 2 H(+). The protein operates within tRNA modification; tRNA-queuosine biosynthesis. In terms of biological role, transfers and isomerizes the ribose moiety from AdoMet to the 7-aminomethyl group of 7-deazaguanine (preQ1-tRNA) to give epoxyqueuosine (oQ-tRNA). In Synechococcus sp. (strain CC9311), this protein is S-adenosylmethionine:tRNA ribosyltransferase-isomerase.